The following is a 417-amino-acid chain: MSSKYPRSVRCCLPLCALTLEAALILLFYFFTHYDASLEDQKGLVASYQVGQDLTVMAAIGFGFLTSSFRRHSWSSVAFNLFMLALGVQWAILLDGFLSQFPPGKVVITLFSIRLATTSALSVLISAGAVLGYVNLVQLVVMVLVEVTALGTMRMVISNIFNTDYHMNMMHFYLFTAYFGVTVAWCLPKPLPDVKEDKDQIATIPSLSAMLGALFLWMFWPSFNSALLRSPIERKNAVFNTYYALAVSVVTAISGSSLAHPQGKISMTYVHSAVLAGGVAVGTSCHLIPSPWLAMVLGLVAGLISIGGAKCGPGCCNRVLGIPDSSVMHYNFSLLGLLGEIIYIVLVVRHTVWNGNGMIGFQVLLSMGELSLAIAIALTSGLLTGLLLNLKIWKAPHVAKYSDDQVFWKFPHLAVGF.

11 helical membrane-spanning segments follow: residues 12–32, 44–64, 77–97, 125–145, 172–192, 203–223, 238–258, 265–285, 287–307, 331–351, and 358–378; these read CLPL…YFFT, LVAS…GFGF, VAFN…LDGF, ISAG…MVLV, FYLF…KPLP, TIPS…WPSF, VFNT…GSSL, ISMT…GTSC, LIPS…ISIG, NFSL…VRHT, and MIGF…AIAL.

This sequence belongs to the ammonium transporter (TC 2.A.49) family. Rh subfamily.

Its subcellular location is the membrane. May be part of an oligomeric complex which is likely to have a transport or channel function in the erythrocyte membrane. In Pan troglodytes (Chimpanzee), this protein is RH-like protein IIF.